The sequence spans 302 residues: Protein transport protein SEC13 homolog B (302 aa).

6 WD repeats span residues 9-48 (GHED…GSQQ), 54-95 (GHRG…QWTQ), 101-142 (DHKS…GWDT), 148-201 (AHPV…WKMD), 208-251 (KHTD…EQWE), and 257-296 (DFMT…EWEQ).

The protein belongs to the WD repeat SEC13 family. In terms of assembly, part of the nuclear pore complex (NPC). The NPC has an eight-fold symmetrical structure comprising a central transport channel and two rings, the cytoplasmic and nuclear rings, to which eight filaments are attached. The cytoplasmic filaments have loose ends, while the nuclear filaments are joined in a distal ring, forming a nuclear basket. NPCs are highly dynamic in configuration and composition, and can be devided in 3 subcomplexes, the NUP62 subcomplex, the NUP107-160 subcomplex and the NUP93 subcomplex, containing approximately 30 different nucleoporin proteins. Interacts with MAG5, SEC31A and SEC31B.

It is found in the golgi apparatus. The protein localises to the endoplasmic reticulum. Its subcellular location is the nucleus envelope. The protein resides in the nucleus. It localises to the nuclear pore complex. Required for protein transport from the endoplasmic reticulum to the Golgi apparatus. In Arabidopsis thaliana (Mouse-ear cress), this protein is Protein transport protein SEC13 homolog B.